Reading from the N-terminus, the 93-residue chain is UPF0358 protein OB1428 (93 aa).

This sequence belongs to the UPF0358 family.

The sequence is that of UPF0358 protein OB1428 from Oceanobacillus iheyensis (strain DSM 14371 / CIP 107618 / JCM 11309 / KCTC 3954 / HTE831).